Consider the following 358-residue polypeptide: Heme A synthase 1 (358 aa).

A run of 5 helical transmembrane segments spans residues 11–31 (LVGT…VGGG), 98–117 (WGRL…RLRG), 123–143 (LTAW…MGWY), 159–179 (LYLG…LWTA), and 199–219 (LLSV…LVAA). Heme is bound at residue His-262. 3 helical membrane-spanning segments follow: residues 264 to 284 (VAAT…LRAP), 292 to 312 (LFLL…STLV), and 315 to 335 (MAEL…ACIA). His-322 lines the heme pocket.

This sequence belongs to the COX15/CtaA family. Type 2 subfamily. Interacts with CtaB. Requires heme b as cofactor.

It is found in the cell membrane. The catalysed reaction is Fe(II)-heme o + 2 A + H2O = Fe(II)-heme a + 2 AH2. Its pathway is porphyrin-containing compound metabolism; heme A biosynthesis; heme A from heme O: step 1/1. Its function is as follows. Catalyzes the conversion of heme O to heme A by two successive hydroxylations of the methyl group at C8. The first hydroxylation forms heme I, the second hydroxylation results in an unstable dihydroxymethyl group, which spontaneously dehydrates, resulting in the formyl group of heme A. The polypeptide is Heme A synthase 1 (Acidiphilium cryptum (strain JF-5)).